The primary structure comprises 464 residues: Arylsulfatase (464 aa).

Positions 1–20 (MNKKAMAAAVSMILAGGAHA) are cleaved as a signal peptide. 3 residues coordinate Ca(2+): aspartate 34, aspartate 35, and serine 72. Serine 72 acts as the Nucleophile in catalysis. Serine 72 carries the 3-oxoalanine (Ser) modification. The active site involves histidine 134. Positions 329 and 330 each coordinate Ca(2+).

Belongs to the sulfatase family. It depends on Ca(2+) as a cofactor. The conversion to 3-oxoalanine (also known as C-formylglycine, FGly), of a serine or cysteine residue in prokaryotes and of a cysteine residue in eukaryotes, is critical for catalytic activity.

The protein localises to the periplasm. It carries out the reaction an aryl sulfate + H2O = a phenol + sulfate + H(+). Its function is as follows. Plays an important role in the mineralization of sulfates. The protein is Arylsulfatase (atsA) of Klebsiella aerogenes (Enterobacter aerogenes).